A 551-amino-acid chain; its full sequence is Probable malate:quinone oxidoreductase (551 aa).

A compositionally biased stretch (low complexity) spans 525 to 544 (QTAAAAPQAQPQLKPQPDAK). A disordered region spans residues 525–551 (QTAAAAPQAQPQLKPQPDAKPVADIAL).

Belongs to the MQO family. FAD serves as cofactor.

The enzyme catalyses (S)-malate + a quinone = a quinol + oxaloacetate. It functions in the pathway carbohydrate metabolism; tricarboxylic acid cycle; oxaloacetate from (S)-malate (quinone route): step 1/1. This Enterobacter sp. (strain 638) protein is Probable malate:quinone oxidoreductase.